The primary structure comprises 351 residues: O-methyltransferase apf6 (351 aa).

S-adenosyl-L-methionine-binding positions include 231–232 (GG), 279–280 (NF), and Arg295. His299 serves as the catalytic Proton acceptor.

The protein belongs to the class I-like SAM-binding methyltransferase superfamily. Cation-independent O-methyltransferase family.

It functions in the pathway secondary metabolite biosynthesis. Its function is as follows. O-methyltransferase; part of the gene cluster that mediates the biosynthesis of the cyclic tetrapeptide apicidin F (APF). The non-ribosomal peptide synthetase apf1 incorporates four different amino acids to produce apicidin F: L-phenylalanine, D-pipecolic acid (D-pip), N-methoxy-L-tryptophan and L-2-aminooctanedioic acid. L-Phenylalanine is the only proteinogenic amino acid directly used by apf1. The 3 other apf1 substrates are non-proteinogenic and have to be modified by other enzymes of the cluster. Lysine is converted to delta-1-pyrroline-5-carboxylate (P5C) which is reduced to L-pipecolic acid (L-pip) by apf3. L-pip is epimerized to D-pip, probably by apf1 activity, prior to incorporation. L-Tryptophan is N-oxidyzed by one of the cytochrome P450 monooxygenases (apf7 or apf8), and further methylated at the hydroxy group by the O-methyltransferase apf6 to yield N-methoxy-L-tryptophan. The synthesis of the fourth apf1 substrate is more complex. The fatty acid synthase apf5 is involved in the synthesis of the octanoic acid backbone of L-2-aminooctanedioic acid by fixing one acetyl-CoA unit and three malonyl-CoA units. Then one of the cytochrome P450 monooxygenases (apf7 or apf8) may oxidize this backbone to 2-oxooctanoic acid. The aminotransferase apf4 is predicted to catalyze the exchange of the keto group with an amino group. The next step would be the oxidation of 2-aminooctanoic acid by one of the cytochrome P450 monooxygenases (apf7 or apf8). The last step is the oxidation of 2-amino-8-hydroxyoctanoic acid to 2-aminooctanedioic acid is catalyzed by the FAD-dependent monooxygenase apf9. This is O-methyltransferase apf6 from Gibberella fujikuroi (strain CBS 195.34 / IMI 58289 / NRRL A-6831) (Bakanae and foot rot disease fungus).